The sequence spans 430 residues: Aspartate aminotransferase, mitochondrial (430 aa).

The N-terminal 29 residues, 1 to 29 (MALLHSGRVLSGVASAFHPGLAAAASARA), are a transit peptide targeting the mitochondrion. Threonine 48 is subject to Phosphothreonine. Lysine 59 bears the N6-acetyllysine mark. A substrate-binding site is contributed by glycine 65. Residue lysine 73 is modified to N6-acetyllysine; alternate. The residue at position 73 (lysine 73) is an N6-succinyllysine; alternate. Lysine 82 carries the N6-acetyllysine modification. Lysine 90 is modified (N6-acetyllysine; alternate). At lysine 90 the chain carries N6-succinyllysine; alternate. Position 96 is a 3'-nitrotyrosine; alternate (tyrosine 96). A Phosphotyrosine; alternate modification is found at tyrosine 96. Lysine 107, lysine 122, and lysine 159 each carry N6-acetyllysine; alternate. N6-succinyllysine; alternate occurs at positions 107, 122, and 159. Residue tryptophan 162 participates in substrate binding. Lysine 185 carries the post-translational modification N6-acetyllysine; alternate. Lysine 185 is subject to N6-succinyllysine; alternate. Position 215 (asparagine 215) interacts with substrate. The residue at position 227 (lysine 227) is an N6-succinyllysine. The residue at position 234 (lysine 234) is an N6-acetyllysine. 2 positions are modified to N6-acetyllysine; alternate: lysine 279 and lysine 296. Lysine 279 is subject to N6-(pyridoxal phosphate)lysine; alternate. Residue lysine 296 is modified to N6-succinyllysine; alternate. Position 302 is an N6-acetyllysine (lysine 302). The residue at position 309 (lysine 309) is an N6-acetyllysine; alternate. An N6-succinyllysine; alternate modification is found at lysine 309. The residue at position 313 (arginine 313) is an Asymmetric dimethylarginine. At lysine 345 the chain carries N6-acetyllysine. Position 363 is an N6-acetyllysine; alternate (lysine 363). Position 363 is an N6-succinyllysine; alternate (lysine 363). Residues lysine 364 and lysine 387 each carry the N6-acetyllysine modification. 2 positions are modified to N6-acetyllysine; alternate: lysine 396 and lysine 404. 2 positions are modified to N6-succinyllysine; alternate: lysine 396 and lysine 404. Residue arginine 407 participates in substrate binding.

Belongs to the class-I pyridoxal-phosphate-dependent aminotransferase family. In terms of assembly, homodimer. Pyridoxal 5'-phosphate serves as cofactor.

The protein resides in the mitochondrion matrix. It localises to the cell membrane. It carries out the reaction L-aspartate + 2-oxoglutarate = oxaloacetate + L-glutamate. It catalyses the reaction L-kynurenine + 2-oxoglutarate = kynurenate + L-glutamate + H2O. Catalyzes the irreversible transamination of the L-tryptophan metabolite L-kynurenine to form kynurenic acid (KA). As a member of the malate-aspartate shuttle, it has a key role in the intracellular NAD(H) redox balance. Is important for metabolite exchange between mitochondria and cytosol, and for amino acid metabolism. Facilitates cellular uptake of long-chain free fatty acids. In Sus scrofa (Pig), this protein is Aspartate aminotransferase, mitochondrial (GOT2).